Here is a 482-residue protein sequence, read N- to C-terminus: Auxin transporter-like protein 2 (482 aa).

Over 1–58 (MVPAGDQAEEAIVADAGKEEAEVRAAMGVEQDGKFSMTSLLWHGGSVWDAWFSCASNQ) the chain is Cytoplasmic. A helical membrane pass occupies residues 59 to 76 (VAQVLLTLPYSFSQLGML). The Extracellular segment spans residues 77 to 78 (SG). A helical membrane pass occupies residues 79 to 99 (LLLQVFYGLMGSWTAYLISVL). The Cytoplasmic portion of the chain corresponds to 100–134 (YVEYRARKEKEGVSFKNHVIQWFEVLDGLLGPYWK). A helical transmembrane segment spans residues 135 to 155 (AAGLAFNCTFLLFGSVIQLIA). Over 156 to 171 (CASNIYYINDRLDKRT) the chain is Extracellular. A helical membrane pass occupies residues 172–192 (WTYIFGACCSTTVFIPSFHNY). Residue R193 is a topological domain, cytoplasmic. Residues 194–214 (IWSFLGLGMTTYTAWYLAIAA) traverse the membrane as a helical segment. At 215–231 (AVHGQVDGVTHSGPSKM) the chain is on the extracellular side. Residues 232–252 (VLYFTGATNILYTFGGHAVTV) traverse the membrane as a helical segment. Residues 253–265 (EIMHAMWKPQKFK) are Cytoplasmic-facing. A helical transmembrane segment spans residues 266–286 (YIYLVATLYVFTLTLPSASAM). The Extracellular segment spans residues 287 to 313 (YWAFGDALLTHSNAFSLLPRSGWRDAA). The helical transmembrane segment at 314 to 334 (VILMLIHQFITFGFACTPLYF) threads the bilayer. Residues 335–355 (VWEKAIGMHGTRSVLTRALAR) lie on the Cytoplasmic side of the membrane. Residues 356-376 (LPIVVPIWFLAIIFPFFGPIN) form a helical membrane-spanning segment. A topological domain (extracellular) is located at residue S377. Residues 378 to 398 (AVGALLVSFTVYIIPSLSHIL) traverse the membrane as a helical segment. At 399–423 (TYRSASARLNAAEKPPPFLPSWSGM) the chain is on the cytoplasmic side. A helical membrane pass occupies residues 424–444 (FVVNVFVVAWVLVVGFGLGGW). Over 445–482 (ASVTNFIKQIDTFGLFAKCYQCPPRAHAGAPLPAPPRH) the chain is Extracellular.

This sequence belongs to the amino acid/polyamine transporter 2 family. Amino acid/auxin permease (AAAP) (TC 2.A.18.1) subfamily.

The protein localises to the cell membrane. Carrier protein involved in proton-driven auxin influx. May mediate the formation of auxin gradient from developing leaves (site of auxin biosynthesis) to tips. This Oryza sativa subsp. japonica (Rice) protein is Auxin transporter-like protein 2.